The following is a 329-amino-acid chain: Beta-ketoacyl-[acyl-carrier-protein] synthase III (329 aa).

Residues Cys-123 and His-256 contribute to the active site. The segment at 257-261 (QANIR) is ACP-binding. Asn-286 is an active-site residue.

This sequence belongs to the thiolase-like superfamily. FabH family. As to quaternary structure, homodimer.

Its subcellular location is the cytoplasm. It catalyses the reaction malonyl-[ACP] + acetyl-CoA + H(+) = 3-oxobutanoyl-[ACP] + CO2 + CoA. It functions in the pathway lipid metabolism; fatty acid biosynthesis. Functionally, catalyzes the condensation reaction of fatty acid synthesis by the addition to an acyl acceptor of two carbons from malonyl-ACP. Catalyzes the first condensation reaction which initiates fatty acid synthesis and may therefore play a role in governing the total rate of fatty acid production. Possesses both acetoacetyl-ACP synthase and acetyl transacylase activities. Its substrate specificity determines the biosynthesis of branched-chain and/or straight-chain of fatty acids. This is Beta-ketoacyl-[acyl-carrier-protein] synthase III from Burkholderia vietnamiensis (strain G4 / LMG 22486) (Burkholderia cepacia (strain R1808)).